The chain runs to 318 residues: MVGYDAKADARSNSKLEVAVAGSVSGFVTRALISPLDVIKIRFQLQLERVCPSDPNAKYHGILQAAKQILQEEGPRAFWKGHVPAQILSIGYGAVQFLAFEELTELLYQANLYQTHQFSAHFVCGGLSAGTATLTVHPVDVLRTRLAAQGEPKIYSNLREAIRTMYRTEGPFVFYKGLTPTVIAIFPYAGLQFSCYRSLKRAYDWIMPPDGKQTGNLKNLLCGCGSGVISKTLTYPLDLFKKRLQVRGFEHARSAFGQVRSYRGLLDLAQQVLQHEGTRGFFKGLSPSLMKAALSTGFMFFWYELFCNLFHCIRREDR.

Solcar repeat units follow at residues 13 to 106 (NSKL…LTEL), 116 to 202 (HQFS…LKRA), and 214 to 309 (TGNL…FCNL). The next 6 membrane-spanning stretches (helical) occupy residues 19–39 (AVAG…LDVI), 87–107 (ILSI…TELL), 122–142 (FVCG…VDVL), 173–193 (VFYK…GLQF), 220–240 (LLCG…LDLF), and 293–313 (ALST…FHCI).

The protein belongs to the mitochondrial carrier (TC 2.A.29) family.

The protein resides in the mitochondrion membrane. The catalysed reaction is thiamine phosphate(out) + thiamine diphosphate(in) = thiamine phosphate(in) + thiamine diphosphate(out). In terms of biological role, mitochondrial transporter mediating uptake of thiamine diphosphate into mitochondria. It is not clear if the antiporter activity is affected by the membrane potential or by the proton electrochemical gradient. This Rattus norvegicus (Rat) protein is Mitochondrial thiamine pyrophosphate carrier (Slc25a19).